The sequence spans 468 residues: Microtubule-associated tyrosine carboxypeptidase 1 (468 aa).

Over residues Met-1 to Tyr-10 the composition is skewed to polar residues. 2 disordered regions span residues Met-1 to Tyr-39 and Met-77 to Pro-112. A Zn(2+)-binding site is contributed by His-277. Catalysis depends on Glu-278, which acts as the Nucleophile. Zn(2+) is bound by residues His-282 and Glu-313.

The protein belongs to the peptidase MATCAP family. It depends on Zn(2+) as a cofactor.

It is found in the cytoplasm. The protein localises to the cytoskeleton. It carries out the reaction C-terminal L-alpha-aminoacyl-L-glutamyl-L-glutamyl-L-tyrosyl-[tubulin] + H2O = C-terminal L-alpha-aminoacyl-L-glutamyl-L-glutamyl-[tubulin] + L-tyrosine. The enzyme catalyses C-terminal L-alpha-aminoacyl-L-glutamyl-L-glutamyl-L-phenylalanyl-[tubulin] + H2O = C-terminal L-alpha-aminoacyl-L-glutamyl-L-glutamyl-[tubulin] + L-phenylalanine. In terms of biological role, tyrosine carboxypeptidase that removes the C-terminal tyrosine residue of alpha-tubulin, thereby regulating microtubule dynamics and function. Also able to remove the C-terminal phenylalanine residue of alpha-tubulin TUBA8. Recognizes adjacent tubulin dimers along the same protofilament. The polypeptide is Microtubule-associated tyrosine carboxypeptidase 1 (Rattus norvegicus (Rat)).